We begin with the raw amino-acid sequence, 278 residues long: MLAKRIIPCLDVKDGRVVKGVNFLNLRDAGDPVENALYYNEEEADELVFLDVTASHEKRKIIIDVVERTASVVFMPLTVGGGIKSLDDIRDLLNAGADKVSINTTAVKDPYFIQKASTRFGSQCIVIAIDAKRVDKNFNPKAYPPESWFDDKELSDVLYKEDSRFVLSTHGGRLMRPIDAIAWAKKMEEFGAGEILLTSMDRDGTKEGYDIELTRAISEAVSIPVIASGGAGTLEHLYEAFAYAKADAALAASIFHFREYSIREAKEFLRQKGIPVRI.

Active-site residues include D11 and D130.

Belongs to the HisA/HisF family. In terms of assembly, heterodimer of HisH and HisF.

The protein localises to the cytoplasm. It catalyses the reaction 5-[(5-phospho-1-deoxy-D-ribulos-1-ylimino)methylamino]-1-(5-phospho-beta-D-ribosyl)imidazole-4-carboxamide + L-glutamine = D-erythro-1-(imidazol-4-yl)glycerol 3-phosphate + 5-amino-1-(5-phospho-beta-D-ribosyl)imidazole-4-carboxamide + L-glutamate + H(+). It participates in amino-acid biosynthesis; L-histidine biosynthesis; L-histidine from 5-phospho-alpha-D-ribose 1-diphosphate: step 5/9. Its function is as follows. IGPS catalyzes the conversion of PRFAR and glutamine to IGP, AICAR and glutamate. The HisF subunit catalyzes the cyclization activity that produces IGP and AICAR from PRFAR using the ammonia provided by the HisH subunit. This Thermodesulfovibrio yellowstonii (strain ATCC 51303 / DSM 11347 / YP87) protein is Imidazole glycerol phosphate synthase subunit HisF.